Here is a 384-residue protein sequence, read N- to C-terminus: Mannitol-1-phosphate 5-dehydrogenase (384 aa).

3–14 is a binding site for NAD(+); it reads ALHFGAGNIGRG.

The protein belongs to the mannitol dehydrogenase family.

The enzyme catalyses D-mannitol 1-phosphate + NAD(+) = beta-D-fructose 6-phosphate + NADH + H(+). This Clostridium acetobutylicum (strain ATCC 824 / DSM 792 / JCM 1419 / IAM 19013 / LMG 5710 / NBRC 13948 / NRRL B-527 / VKM B-1787 / 2291 / W) protein is Mannitol-1-phosphate 5-dehydrogenase (mtlD).